The primary structure comprises 1034 residues: Mediator of RNA polymerase II transcription subunit 15 (1034 aa).

Low complexity-rich tracts occupy residues 101–123 (QRQQ…QQQA), 138–149 (QQAQARQQAQRQ), 157–183 (QQQQ…QLTL), 281–312 (MNQV…QPQH), 413–441 (QQIP…SRRQ), 459–490 (PQPQ…QQQQ), and 655–675 (QSQT…QQPI). Disordered stretches follow at residues 101 to 124 (QRQQ…QQAN), 138 to 183 (QQAQ…QLTL), 281 to 315 (MNQV…HQEP), 413 to 497 (QQIP…SVPR), 655 to 682 (QSQT…NNNS), 712 to 804 (SAIS…NPYK), and 951 to 1020 (ISPT…ESTD). Composition is skewed to polar residues over residues 738-764 (NSQS…TATP) and 772-802 (PMFN…QDNP). The span at 962-971 (SESKKVKFDS) shows a compositional bias: basic and acidic residues. Residues 998 to 1020 (SINSKPSIPSSAGNMPAPNESTD) show a composition bias toward polar residues.

It belongs to the Mediator complex subunit 15 family. Component of the Mediator complex.

It is found in the nucleus. Component of the Mediator complex, a coactivator involved in the regulated transcription of nearly all RNA polymerase II-dependent genes. Mediator functions as a bridge to convey information from gene-specific regulatory proteins to the basal RNA polymerase II transcription machinery. Mediator is recruited to promoters by direct interactions with regulatory proteins and serves as a scaffold for the assembly of a functional preinitiation complex with RNA polymerase II and the general transcription factors. Required for transcription of genes encoding galactose-metabolizing enzymes. Essential for normal growth on nonfermentable carbon sources, for sporulation and mating. The chain is Mediator of RNA polymerase II transcription subunit 15 (GAL11) from Kluyveromyces lactis (strain ATCC 8585 / CBS 2359 / DSM 70799 / NBRC 1267 / NRRL Y-1140 / WM37) (Yeast).